Reading from the N-terminus, the 343-residue chain is MIKLSNITKVFQQGARTIQALNNVSLHVPAGQIYGVIGASGAGKSTLIRCVNLLERPTEGSVQVGGQELTTLSESELTKARRQIGMIFQHFNLLSSRTVFGNVALPLELDNTPKEEIKRRVTELLDLVGLGDKHDSYPANLSGGQKQRVAIARALASNPKVLLCDEATSALDPATTRSILELLKDINRRLGLTILLITHEMDVVKRICDCVAVISNGELIEQDTVSEVFSHPKTPLAQKFIQSTLHLDIPEDYQARLKASPETDSVPMLRMEFTGQSVDAPLLSETARRFNVNNNIISAQMDYAGGVKFGIMLTEMHGTQEETQAAIAWLQDHHVKVEVLGYV.

The ABC transporter domain maps to 2–241 (IKLSNITKVF…PKTPLAQKFI (240 aa)). An ATP-binding site is contributed by 38 to 45 (GASGAGKS).

The protein belongs to the ABC transporter superfamily. Methionine importer (TC 3.A.1.24) family. The complex is composed of two ATP-binding proteins (MetN), two transmembrane proteins (MetI) and a solute-binding protein (MetQ).

The protein resides in the cell inner membrane. It carries out the reaction L-methionine(out) + ATP + H2O = L-methionine(in) + ADP + phosphate + H(+). The catalysed reaction is D-methionine(out) + ATP + H2O = D-methionine(in) + ADP + phosphate + H(+). In terms of biological role, part of the ABC transporter complex MetNIQ involved in methionine import. Responsible for energy coupling to the transport system. The chain is Methionine import ATP-binding protein MetN 1 from Salmonella choleraesuis (strain SC-B67).